The chain runs to 1638 residues: ATP-dependent helicase brm (1638 aa).

2 disordered regions span residues 1–137 (MASP…SQEN) and 201–387 (QMQQ…GMPM). Residues 7 to 51 (ANSPMPPPQAPSPMAPPSQSPAPSPHSPYPHQQPGPLQGPPPPGH) show a composition bias toward pro residues. Positions 52–63 (PGAYGHPMQHGP) are enriched in low complexity. The segment covering 121 to 131 (GGPPGGPPPPE) has biased composition (pro residues). A QLQ domain is found at 173 to 208 (HLNGNQVNLLRTQITAYRLLARNKPISMQMQQALQA). Residues 201–211 (QMQQALQAAQQ) show a composition bias toward low complexity. Pro residues-rich tracts occupy residues 212 to 231 (QPPP…PPPG), 238 to 253 (PPVP…PSAG), 263 to 272 (ASNPYGPPVP), and 279 to 304 (APPP…PPPI). 2 stretches are compositionally biased toward low complexity: residues 305 to 317 (QQQQ…QQQS) and 365 to 382 (PGSQ…QVPP). The 73-residue stretch at 501–573 (QKLEAERKRR…EKERMRRLMA (73 aa)) folds into the HSA domain. Positions 691–730 (DEEDSCGSNDDHKPKVEEQPTATEDATDKAQATGNDEDAK) are disordered. A phosphoserine mark is found at serine 695 and serine 698. Residues 699–708 (NDDHKPKVEE) show a composition bias toward basic and acidic residues. Positions 710–724 (PTATEDATDKAQATG) are enriched in polar residues. A Helicase ATP-binding domain is found at 785-950 (VSLYNNNLNG…WALLNFLLPS (166 aa)). 798–805 (DEMGLGKT) contacts ATP. The DEGH box motif lies at 900–903 (DEGH). The Helicase C-terminal domain maps to 1102–1263 (LLDRILPKLK…QKSTGSERQQ (162 aa)). Residues 1380–1391 (DGAEFDEEEEED) are compositionally biased toward acidic residues. Residues 1380-1412 (DGAEFDEEEEEDDSKRKRRKRKNRKEESDDDSL) are disordered. Serine 1407 and serine 1411 each carry phosphoserine. The Bromo domain maps to 1425–1530 (RSKKQMHKIM…KVFVGARQRI (106 aa)). Residues 1544-1578 (NTGEAHGNGGSDNSDNDDDDGGDDGSDDEEIATTS) are disordered. Over residues 1557–1574 (SDNDDDDGGDDGSDDEEI) the composition is skewed to acidic residues. A phosphoserine mark is found at serine 1591 and serine 1594. Over residues 1592–1604 (LASAPATPTQSSS) the composition is skewed to low complexity. Residues 1592-1638 (LASAPATPTQSSSNVSSGAATTSKKQTRRKRSQKKYTISDDDDDDMD) form a disordered region. Residues 1616-1625 (KQTRRKRSQK) are compositionally biased toward basic residues.

In terms of assembly, component of the Brahma complex, which is composed of brm, osa, mor, Snr1/Bap45, dalao/Bap111, Bap55, Bap60 and Act42A/Bap47. Interacts with asf1. Associates with the brm-HDAC3-erm repressor complex, composed of brm, HDAC3 and erm. Interacts with erm and HDAC3.

It localises to the nucleus. The catalysed reaction is ATP + H2O = ADP + phosphate + H(+). In terms of biological role, transcriptional regulator. Acts as a coactivator, assisting one or more dedicated transcriptional activators of ANTC and BXC homeotic gene clusters. Can counteract the repressive effect of Polycomb protein. ATPase subunit of the Brahma complex, a multiprotein complex which is the equivalent of the yeast SWI/SNF complex and acts by remodeling the chromatin by catalyzing an ATP-dependent alteration in the structure of nucleosomal DNA. This complex can both serve as a transcriptional coactivator or corepressor, depending on the context. In type II neuroblast lineage, as part of the Brm remodeling complex, suppresses the formation of ectopic neuroblasts probably through interaction with erm and HDAC3. This is ATP-dependent helicase brm (brm) from Drosophila melanogaster (Fruit fly).